Reading from the N-terminus, the 416-residue chain is Pigment epithelium-derived factor (416 aa).

An N-terminal signal peptide occupies residues 1–20; it reads MQALVLLLWTGALLGFGRCQ. A phosphoserine mark is found at Ser112 and Ser225. Asn283 is a glycosylation site (N-linked (GlcNAc...) asparagine).

The protein belongs to the serpin family. As to quaternary structure, interacts with PNPLA2; this interaction stimulates the phospholipase A2 activity of PNPLA2. Retinal pigment epithelial cells. Located in the interphotoreceptor matrix (IPM) which is between the retinal pigment epithelium and the neural retina.

The protein localises to the secreted. It localises to the melanosome. Neurotrophic protein; induces extensive neuronal differentiation in retinoblastoma cells. Potent inhibitor of angiogenesis. As it does not undergo the S (stressed) to R (relaxed) conformational transition characteristic of active serpins, it exhibits no serine protease inhibitory activity. This is Pigment epithelium-derived factor (SERPINF1) from Bos taurus (Bovine).